The chain runs to 374 residues: 5-hydroxytryptamine receptor 1D (374 aa).

At 1-35 the chain is on the extracellular side; the sequence is MSPPNQSLEGLPQEASNRSLNVTGAWDPEVLQALR. N-linked (GlcNAc...) asparagine glycosylation is found at Asn5, Asn17, and Asn21. The helical transmembrane segment at 36–61 threads the bilayer; that stretch reads ISLVVVLSVITLATVLSNAFVLTTIL. Residues 62–72 are Cytoplasmic-facing; that stretch reads LTKKLHTPANY. A helical transmembrane segment spans residues 73–94; the sequence is LIGSLATTDLLVSILVMPISIA. Over 95–106 the chain is Extracellular; it reads YTTTRTWNFGQI. The chain crosses the membrane as a helical span at residues 107 to 131; sequence LCDIWVSSDITCCTASILHLCVIAL. Cys108 and Cys185 are oxidised to a cystine. Serotonin-binding residues include Asp115 and Cys119. The short motif at 132-134 is the DRY motif; important for ligand-induced conformation changes element; the sequence is DRY. Residues 132 to 151 lie on the Cytoplasmic side of the membrane; it reads DRYWAITDALEYSKRRTAGH. Residues 152–173 form a helical membrane-spanning segment; sequence AAAMIAAVWIISICISIPPLFW. Residues 174–191 are Extracellular-facing; it reads RQATAHEEMSDCLVNTSQ. The chain crosses the membrane as a helical span at residues 192 to 215; that stretch reads ISYTIYSTCGAFYIPSILLIILYG. At 216 to 297 the chain is on the cytoplasmic side; that stretch reads RIYVAARSRI…ISAARERKAT (82 aa). Residues 298–323 form a helical membrane-spanning segment; sequence KTLGIILGAFIICWLPFFVVSLVLPI. A serotonin-binding site is contributed by Ser318. Residues 324-332 lie on the Extracellular side of the membrane; the sequence is CRDSCWIHP. The chain crosses the membrane as a helical span at residues 333–356; sequence ALFDFFTWLGYLNSLINPVIYTVF. The NPxxY motif; important for ligand-induced conformation changes and signaling motif lies at 349-353; the sequence is NPVIY. The Cytoplasmic portion of the chain corresponds to 357-374; sequence NEDFRQAFQKVVHFRKIS.

The protein belongs to the G-protein coupled receptor 1 family. In terms of assembly, homodimer. Heterodimer with HTR1B. As to expression, detected in the motor column in spinal cord, and in several cranial motor nuclei, including nucleus ambiguous, oculomotoris, trochelaris and abducens. Detected in gamma motor neurons in the lumbar spinal cord. Detected in proprioceptive sensory neurons in dorsal root ganglia.

The protein localises to the cell membrane. Functionally, G-protein coupled receptor for 5-hydroxytryptamine (serotonin). Also functions as a receptor for ergot alkaloid derivatives, various anxiolytic and antidepressant drugs and other psychoactive substances. Ligand binding causes a conformation change that triggers signaling via guanine nucleotide-binding proteins (G proteins) and modulates the activity of downstream effectors, such as adenylate cyclase. HTR1D is coupled to G(i)/G(o) G alpha proteins and mediates inhibitory neurotransmission by inhibiting adenylate cyclase activity. Regulates the release of 5-hydroxytryptamine in the brain, and thereby affects neural activity. May also play a role in regulating the release of other neurotransmitters. May play a role in vasoconstriction. This is 5-hydroxytryptamine receptor 1D (Htr1d) from Mus musculus (Mouse).